Reading from the N-terminus, the 436-residue chain is Transcription termination factor Rho (436 aa).

Positions 65–140 (LVFVKGVLEI…IRMESVNGLP (76 aa)) constitute a Rho RNA-BD domain. Residues 185–190 (GKGQRG), 197–202 (KAGKTV), and R228 each bind ATP.

Belongs to the Rho family. Homohexamer. The homohexamer assembles into an open ring structure.

Functionally, facilitates transcription termination by a mechanism that involves Rho binding to the nascent RNA, activation of Rho's RNA-dependent ATPase activity, and release of the mRNA from the DNA template. The chain is Transcription termination factor Rho from Aquifex aeolicus (strain VF5).